A 1176-amino-acid chain; its full sequence is Leucine--tRNA ligase, cytoplasmic (1176 aa).

L-leucine contacts are provided by tyrosine 52 and tyrosine 54. The 'HIGH' region signature appears at 60 to 63 (HLGH). Serine 167 is modified (phosphoserine). The tract at residues 260-509 (GPQEYTLLKL…DAGDALIYME (250 aa)) is editing domain. Residues leucine 594 and serine 597 each contribute to the L-leucine site. Residues 716 to 720 (KMSKS) carry the 'KMSKS' region motif. Lysine 719 contributes to the ATP binding site. At serine 720 the chain carries Phosphoserine. Residues lysine 970 and lysine 1047 each carry the N6-acetyllysine modification.

It belongs to the class-I aminoacyl-tRNA synthetase family. In terms of assembly, part of the aminoacyl-tRNA synthetase multienzyme complex, also known as multisynthetase complex (MSC), that is composed of the aminoacyl-tRNA ligases for Arg (RARS1), Asp (DARS1), Gln (QARS1), Ile (IARS1), Leu (LARS1), Lys (KARS1), Met (MARS1) the bifunctional ligase for Glu and Pro (EPRS1) and the auxiliary subunits AIMP1/p43, AIMP2/p38 and EEF1E1/p18.

It localises to the cytoplasm. The enzyme catalyses tRNA(Leu) + L-leucine + ATP = L-leucyl-tRNA(Leu) + AMP + diphosphate. It catalyses the reaction L-methionyl-tRNA(Leu) + H2O = tRNA(Leu) + L-methionine + H(+). With respect to regulation, 5-fluoro-1,3-dihydro-1-hydroxy-1,2-benzoxaborole inhibits LARS1 by forming a covalent adduct with the 3' adenosine of tRNA(Leu) at the editing site, thus locking the enzyme in an inactive conformation. Aminoacyl-tRNA synthetase that catalyzes the specific attachment of leucine to its cognate tRNA (tRNA(Leu)). It performs tRNA aminoacylation in a two-step reaction: Leu is initially activated by ATP to form a leucyl-adenylate (Leu-AMP) intermediate; then the leucyl moiety is transferred to the acceptor 3' end of the tRNA to yield leucyl-tRNA. To improve the fidelity of catalytic reactions, it is also able to hydrolyze misactivated aminoacyl-adenylate intermediates (pre-transfer editing) and mischarged aminoacyl-tRNAs (post-transfer editing). The protein is Leucine--tRNA ligase, cytoplasmic of Homo sapiens (Human).